Reading from the N-terminus, the 181-residue chain is Cytolethal distending toxin subunit C (181 aa).

The signal sequence occupies residues 1-15; sequence MKKLAIVFTMLLIAG. Residue cysteine 16 is the site of N-palmitoyl cysteine attachment. Cysteine 16 is lipidated: S-diacylglycerol cysteine. Positions 79–181 constitute a Ricin B-type lectin domain; the sequence is QSGWIMIRTP…NPLNTESPII (103 aa).

Heterotrimer of 3 subunits, CdtA, CdtB and CdtC.

It localises to the cell outer membrane. Functionally, part of the tripartite complex that is required for the CDT activity. CdtC, along with CdtA, probably forms a heterodimeric subunit required for the delivery of CdtB. The sequence is that of Cytolethal distending toxin subunit C (cdtC) from Escherichia coli.